The following is a 398-amino-acid chain: Aspartate aminotransferase (398 aa).

L-aspartate is bound by residues glycine 36, tryptophan 132, and asparagine 185. The residue at position 248 (lysine 248) is an N6-(pyridoxal phosphate)lysine. Arginine 376 is a binding site for L-aspartate.

It belongs to the class-I pyridoxal-phosphate-dependent aminotransferase family. As to quaternary structure, homodimer. Requires pyridoxal 5'-phosphate as cofactor.

It localises to the cytoplasm. The catalysed reaction is L-aspartate + 2-oxoglutarate = oxaloacetate + L-glutamate. The sequence is that of Aspartate aminotransferase (aspC) from Pseudomonas aeruginosa (strain ATCC 15692 / DSM 22644 / CIP 104116 / JCM 14847 / LMG 12228 / 1C / PRS 101 / PAO1).